A 136-amino-acid polypeptide reads, in one-letter code: Histone H3.3C (136 aa).

Residues methionine 1–tyrosine 42 form a disordered region. The residue at position 3 (arginine 3) is an Asymmetric dimethylarginine; by PRMT6. Position 4 is a phosphothreonine; by HASPIN (threonine 4). Lysine 5 is subject to Allysine; alternate. N6,N6,N6-trimethyllysine; alternate is present on lysine 5. Lysine 5 bears the N6,N6-dimethyllysine; alternate mark. Lysine 5 carries the post-translational modification N6-(2-hydroxyisobutyryl)lysine; alternate. At lysine 5 the chain carries N6-acetyllysine; alternate. Lysine 5 carries the post-translational modification N6-methyllysine; alternate. Glutamine 6 is subject to 5-glutamyl dopamine; alternate. A 5-glutamyl serotonin; alternate modification is found at glutamine 6. Threonine 7 is modified (phosphothreonine; by PKC). N6-(2-hydroxyisobutyryl)lysine; alternate is present on lysine 10. N6-lactoyllysine; alternate is present on lysine 10. Lysine 10 carries the N6-methylated lysine modification. Residue serine 11 is modified to ADP-ribosylserine; alternate. Position 11 is a phosphoserine; alternate; by AURKB, AURKC, RPS6KA3, RPS6KA4 and RPS6KA5 (serine 11). At threonine 12 the chain carries Phosphothreonine; by PKC. N6-(2-hydroxyisobutyryl)lysine; alternate is present on lysine 15. Lysine 15 bears the N6-lactoyllysine; alternate mark. The residue at position 15 (lysine 15) is an N6-acetyllysine. Lysine 15 carries the N6-glutaryllysine; alternate modification. Residue arginine 18 is modified to Asymmetric dimethylarginine. N6-(2-hydroxyisobutyryl)lysine; alternate occurs at positions 19, 24, 28, and 37. An N6-acetyllysine; alternate modification is found at lysine 19. N6-lactoyllysine; alternate occurs at positions 19, 24, and 28. An N6-glutaryllysine; alternate mark is found at lysine 19, lysine 24, and lysine 28. N6-butyryllysine; alternate occurs at positions 19 and 24. Lysine 19 is modified (N6-methylated lysine; alternate). An N6-acetyllysine modification is found at lysine 24. Lysine 28 and lysine 37 each carry N6-acetyllysine; alternate. An N6-methylated lysine; alternate mark is found at lysine 28 and lysine 37. Tyrosine 42 is subject to Phosphotyrosine. Lysine 57 carries the N6-(2-hydroxyisobutyryl)lysine; alternate modification. Residue lysine 57 is modified to N6-lactoyllysine; alternate. Lysine 57 carries the N6-glutaryllysine; alternate modification. Lysine 57 bears the N6-succinyllysine; alternate mark. A Phosphoserine modification is found at serine 58. An N6-(2-hydroxyisobutyryl)lysine; alternate mark is found at lysine 65 and lysine 80. 2 positions are modified to N6-methylated lysine: lysine 65 and lysine 80. Lysine 80 bears the N6-lactoyllysine; alternate mark. Lysine 80 carries the post-translational modification N6-glutaryllysine; alternate. An N6-succinyllysine; alternate modification is found at lysine 80. At threonine 81 the chain carries Phosphothreonine. N6-acetyllysine; alternate occurs at positions 116 and 123. Lysine 116 and lysine 123 each carry N6-glutaryllysine; alternate. Position 123 is an N6-(2-hydroxyisobutyryl)lysine; alternate (lysine 123). Lysine 123 carries the post-translational modification N6-methylated lysine; alternate. Position 123 is an N6-succinyllysine; alternate (lysine 123).

The protein belongs to the histone H3 family. In terms of assembly, the nucleosome is a histone octamer containing two molecules each of H2A, H2B, H3 and H4 assembled in one H3-H4 heterotetramer and two H2A-H2B heterodimers. The octamer wraps approximately 147 bp of DNA. Acetylation is generally linked to gene activation. Acetylation on Lys-19 (H3K18ac) and Lys-24 (H3K24ac) favors methylation at Arg-18 (H3R17me). Acetylation at Lys-123 (H3K122ac) by EP300/p300 plays a central role in chromatin structure: localizes at the surface of the histone octamer and stimulates transcription, possibly by promoting nucleosome instability. In terms of processing, asymmetric dimethylation at Arg-18 (H3R17me2a) is linked to gene activation. Asymmetric dimethylation at Arg-3 (H3R2me2a) by PRMT6 is linked to gene repression and is mutually exclusive with H3 Lys-5 methylation (H3K4me2 and H3K4me3). H3R2me2a is present at the 3' of genes regardless of their transcription state and is enriched on inactive promoters, while it is absent on active promoters. Post-translationally, methylation at Lys-5 (H3K4me) and Lys-80 (H3K79me) are linked to gene activation. Methylation at Lys-5 (H3K4me) facilitates subsequent acetylation of H3 and H4. Methylation at Lys-80 (H3K79me) is associated with DNA double-strand break (DSB) responses and is a specific target for TP53BP1. Methylation at Lys-10 (H3K9me) and Lys-28 (H3K27me) are linked to gene repression. Methylation at Lys-10 (H3K9me) is a specific target for HP1 proteins (CBX1, CBX3 and CBX5) and prevents subsequent phosphorylation at Ser-11 (H3S10ph) and acetylation of H3 and H4. Methylation at Lys-5 (H3K4me) and Lys-80 (H3K79me) require preliminary monoubiquitination of H2B at 'Lys-120'. Phosphorylated at Thr-4 (H3T3ph) by HASPIN during prophase and dephosphorylated during anaphase. Phosphorylation at Ser-11 (H3S10ph) by aurkb is crucial for chromosome condensation and cell-cycle progression during mitosis and meiosis. In addition phosphorylation at Ser-11 (H3S10ph) by rps6ka4 and rps6ka5 is important during interphase because it enables the transcription of genes following external stimulation, like mitogens, stress, growth factors or UV irradiation and result in the activation of genes, such as c-fos and c-jun. Phosphorylation at Ser-11 (H3S10ph), which is linked to gene activation, prevents methylation at Lys-10 (H3K9me) but facilitates acetylation of H3 and H4. Phosphorylation at Ser-11 (H3S10ph) by aurkb mediates the dissociation of HP1 proteins (cbx1, cbx3 and cbx5) from heterochromatin. Phosphorylation at Ser-11 (H3S10ph) is also an essential regulatory mechanism for neoplastic cell transformation. Phosphorylation at Thr-7 (H3T6ph) by prkcb is a specific tag for epigenetic transcriptional activation that prevents demethylation of Lys-5 (H3K4me) by lsd1/kdm1a. At centromeres, specifically phosphorylated at Thr-12 (H3T11ph) from prophase to early anaphase, by DAPK3 and PKN1. Phosphorylation at Thr-12 (H3T11ph) by PKN1 or isoform M2 of PKM (PKM2) is a specific tag for epigenetic transcriptional activation that promotes demethylation of Lys-10 (H3K9me) by kdm4c/jmjd2c. Phosphorylation at Tyr-42 (H3Y41ph) by jak2 promotes exclusion of cbx5 (HP1 alpha) from chromatin. In terms of processing, lysine deamination at Lys-5 (H3K4all) to form allysine only takes place on H3K4me3 and results in gene repression. Post-translationally, butyrylation of histones marks active promoters and competes with histone acetylation. It is present during late spermatogenesis. Succinylation at Lys-80 (H3K79succ) by KAT2A takes place with a maximum frequency around the transcription start sites of genes. It gives a specific tag for epigenetic transcription activation. Desuccinylation at Lys-123 (H3K122succ) by SIRT7 in response to DNA damage promotes chromatin condensation and double-strand breaks (DSBs) repair. In terms of processing, serine ADP-ribosylation constitutes the primary form of ADP-ribosylation of proteins in response to DNA damage. Serine ADP-ribosylation at Ser-11 (H3S10ADPr) is mutually exclusive with phosphorylation at Ser-11 (H3S10ph) and impairs acetylation at Lys-10 (H3K9ac).

It is found in the nucleus. The protein localises to the chromosome. In terms of biological role, core component of nucleosome. Nucleosomes wrap and compact DNA into chromatin, limiting DNA accessibility to the cellular machineries which require DNA as a template. Histones thereby play a central role in transcription regulation, DNA repair, DNA replication and chromosomal stability. DNA accessibility is regulated via a complex set of post-translational modifications of histones, also called histone code, and nucleosome remodeling. This chain is Histone H3.3C (h3-5), found in Xenopus laevis (African clawed frog).